Reading from the N-terminus, the 37-residue chain is Hemextin B (37 aa).

As to quaternary structure, heterotetramer composed of 2 hemextin A and 2 hemextin B chains; non-covalently linked. Does not exist as a complex in the crude venom. May contain several disulfide bonds. As to expression, expressed by the venom gland.

It localises to the secreted. Its function is as follows. Hemextin B (monomer): does not show anticoagulant activity. Seems only to synergitically enhance hemextin A activity. In terms of biological role, hemextin AB complex: specifically inhibits the activation of FX (F10) by the TF-FVIIa complex (extrinsic tenase complex (ETC)) (IC(50)= 100 nM, Ki=50 nM) by non-competitively inhibiting the enzymatic activity of FVIIa. This is Hemextin B from Hemachatus haemachatus (Rinkhals).